The sequence spans 358 residues: Probable aminomethyltransferase (358 aa).

It belongs to the GcvT family. As to quaternary structure, the glycine cleavage system is composed of four proteins: P, T, L and H.

It catalyses the reaction N(6)-[(R)-S(8)-aminomethyldihydrolipoyl]-L-lysyl-[protein] + (6S)-5,6,7,8-tetrahydrofolate = N(6)-[(R)-dihydrolipoyl]-L-lysyl-[protein] + (6R)-5,10-methylene-5,6,7,8-tetrahydrofolate + NH4(+). Functionally, the glycine cleavage system catalyzes the degradation of glycine. The polypeptide is Probable aminomethyltransferase (Natronomonas pharaonis (strain ATCC 35678 / DSM 2160 / CIP 103997 / JCM 8858 / NBRC 14720 / NCIMB 2260 / Gabara) (Halobacterium pharaonis)).